The primary structure comprises 239 residues: 2,3,4,5-tetrahydropyridine-2,6-dicarboxylate N-acetyltransferase (239 aa).

This sequence belongs to the transferase hexapeptide repeat family. DapH subfamily.

It catalyses the reaction (S)-2,3,4,5-tetrahydrodipicolinate + acetyl-CoA + H2O = L-2-acetamido-6-oxoheptanedioate + CoA. The protein operates within amino-acid biosynthesis; L-lysine biosynthesis via DAP pathway; LL-2,6-diaminopimelate from (S)-tetrahydrodipicolinate (acetylase route): step 1/3. Its function is as follows. Catalyzes the transfer of an acetyl group from acetyl-CoA to tetrahydrodipicolinate. The protein is 2,3,4,5-tetrahydropyridine-2,6-dicarboxylate N-acetyltransferase of Staphylococcus carnosus (strain TM300).